The chain runs to 115 residues: T cell receptor beta variable 7-6 (115 aa).

A signal peptide spans M1–A21. The Ig-like domain occupies G22–L115. A disulfide bond links C42 and C111.

As to quaternary structure, alpha-beta TR is a heterodimer composed of an alpha and beta chain; disulfide-linked. The alpha-beta TR is associated with the transmembrane signaling CD3 coreceptor proteins to form the TR-CD3 (TcR or TCR). The assembly of alpha-beta TR heterodimers with CD3 occurs in the endoplasmic reticulum where a single alpha-beta TR heterodimer associates with one CD3D-CD3E heterodimer, one CD3G-CD3E heterodimer and one CD247 homodimer forming a stable octameric structure. CD3D-CD3E and CD3G-CD3E heterodimers preferentially associate with TR alpha and TR beta chains, respectively. The association of the CD247 homodimer is the last step of TcR assembly in the endoplasmic reticulum and is required for transport to the cell surface.

It localises to the cell membrane. V region of the variable domain of T cell receptor (TR) beta chain that participates in the antigen recognition. Alpha-beta T cell receptors are antigen specific receptors which are essential to the immune response and are present on the cell surface of T lymphocytes. Recognize peptide-major histocompatibility (MH) (pMH) complexes that are displayed by antigen presenting cells (APC), a prerequisite for efficient T cell adaptive immunity against pathogens. Binding of alpha-beta TR to pMH complex initiates TR-CD3 clustering on the cell surface and intracellular activation of LCK that phosphorylates the ITAM motifs of CD3G, CD3D, CD3E and CD247 enabling the recruitment of ZAP70. In turn ZAP70 phosphorylates LAT, which recruits numerous signaling molecules to form the LAT signalosome. The LAT signalosome propagates signal branching to three major signaling pathways, the calcium, the mitogen-activated protein kinase (MAPK) kinase and the nuclear factor NF-kappa-B (NF-kB) pathways, leading to the mobilization of transcription factors that are critical for gene expression and essential for T cell growth and differentiation. The T cell repertoire is generated in the thymus, by V-(D)-J rearrangement. This repertoire is then shaped by intrathymic selection events to generate a peripheral T cell pool of self-MH restricted, non-autoaggressive T cells. Post-thymic interaction of alpha-beta TR with the pMH complexes shapes TR structural and functional avidity. This chain is T cell receptor beta variable 7-6, found in Homo sapiens (Human).